A 421-amino-acid polypeptide reads, in one-letter code: MSTTKPICLVPLHVVIVGAGIGGLSAAVALANRGHSVLILESTSELSHVGAGVALPPTTRKWYESEGVLQVDDTACVPLEGIEITKWDTGELVTRTAANPAGKQTAIHHGDMQLALLARARELTNVEIRLGARVVDVDLEATVALLADGQRVAGDLIIAADGVKSTLKAKVCPPEAVVPLPTGEAAYRFTLPRELLESDAELRELVQRPWGVRWDGPSCHVVAYPLRNHRLLNVVLIHPDNGDAKESWTSVTDKQNVLADYQGWNPTLLKLIALAPPEVPNFRMFLYSPAPVWVKGSTILLGDSCHAMLPYLGQGVAQAVEDATAIATVLSLIETRKQLPLALRAYESSRKERVDQIQAATYRAREQLHLRDGDAQAARDSQRKATSGTGQNSDVVKMQQSYWTWDAAGVAEKTLAALIIA.

A helical transmembrane segment spans residues 9–29 (LVPLHVVIVGAGIGGLSAAVA). Glu-41 and Ala-54 together coordinate FAD. Arg-188 is an active-site residue. FAD is bound by residues Asp-303 and Val-316. Residues 371–392 (RDGDAQAARDSQRKATSGTGQN) form a disordered region.

It belongs to the paxM FAD-dependent monooxygenase family. FAD is required as a cofactor.

The protein localises to the membrane. Its pathway is secondary metabolite biosynthesis; terpenoid biosynthesis. Its function is as follows. FAD-dependent monooxygenase; part of the gene cluster that mediates the biosynthesis of the meroterpenoids arthripenoids. The pathway begins with the HR-PKS atnH that catalyzes two chain-extension steps to form a reduced triketide, which then primes the SAT domain in the NR-PKS atnG to initiate three more cycles of extension to give a linear hexaketide corresponding to the polyketide part of arthripenoids. The FAD-dependent monooxygenase atnJ then performs an oxidative decarboxylation at C11 of the atnH/atnG product, via an electrophilic aromatic hydroxylation with concomitant ipso-decarboxylation. The membrane-bound polyprenyl transferase atnF then introduces a farnesyl group before the FAD-dependent monooxygenase atnK functions as the first epoxidase on terminal C12'-C13' olefin, followed by a second epoxidation on C7'-C8' catalyzed by atnA. The terpene cyclase/mutase atnI then initiates the sequential tricyclic ring formation through protonation of the terminal epoxide and catalyzes the regioselective and stereoselective 6/6/6-tricyclic ring formation. The cytochrome P450 monooxygenase atnM is responsible for hydroxylating both C1' and C10'. The next steps may involve ketoreduction and acetyl transfer by the ketoreductase atnB and the acetyltransferase atnC, and lead to the production of arthripenoid B, the final biosynthetic product of the atn cluster. The hydroquinone moiety in arthripenoid B is prone to undergo spontaneous oxidation to afford a benzoquinone compound, a key intermediate for generating structure diversity. For instance, addition of a cysteine followed by ring contraction gives arthripenoid A, tautomerization gives the main product arthripenoid C, addition of a molecular of water or amine affords arthripenoid D or E, respectively, and loss of one water forms arthripenoid F. The sequence is that of FAD-dependent monooxygenase atnJ from Arthrinium sp.